Here is a 795-residue protein sequence, read N- to C-terminus: Delta-1-pyrroline-5-carboxylate synthase (795 aa).

A glutamate 5-kinase region spans residues 1–361; sequence MLRHMHRSGV…FFSEVKPAGP (361 aa). Serine 117, aspartate 223, and asparagine 246 together coordinate substrate. ATP contacts are provided by residues 266-267 and 305-311; these read SD and LGGMEAK. An N6-succinyllysine mark is found at lysine 311, lysine 347, and lysine 550. Residues 362–795 form a gamma-glutamyl phosphate reductase region; the sequence is TVEQQGEMAR…NLPVPQRNFS (434 aa).

This sequence in the N-terminal section; belongs to the glutamate 5-kinase family. In the C-terminal section; belongs to the gamma-glutamyl phosphate reductase family. In terms of assembly, can form homodimers/multimers.

The protein resides in the mitochondrion matrix. It catalyses the reaction L-glutamate + ATP = L-glutamyl 5-phosphate + ADP. The enzyme catalyses L-glutamate 5-semialdehyde + phosphate + NADP(+) = L-glutamyl 5-phosphate + NADPH + H(+). It participates in amino-acid biosynthesis; L-proline biosynthesis; L-glutamate 5-semialdehyde from L-glutamate: step 1/2. Its pathway is amino-acid biosynthesis; L-proline biosynthesis; L-glutamate 5-semialdehyde from L-glutamate: step 2/2. Isoform Short: Inhibited by L-ornithine with a Ki of approximately 0.25 mm. Isoform Long: Insensitive to ornithine inhibition. Thus, the two amino acid insert in the long isoform abolishes feedback inhibition of P5CS activity by L-ornithine. In terms of biological role, bifunctional enzyme that converts glutamate to glutamate 5-semialdehyde, an intermediate in the biosynthesis of proline, ornithine and arginine. In Mus musculus (Mouse), this protein is Delta-1-pyrroline-5-carboxylate synthase (Aldh18a1).